The primary structure comprises 238 residues: 5-amino-6-(5-phospho-D-ribitylamino)uracil phosphatase YigB (238 aa).

The active-site Nucleophile is the aspartate 16. 3 residues coordinate Mg(2+): aspartate 16, aspartate 18, and aspartate 188. 16–18 (DLD) provides a ligand contact to substrate.

This sequence belongs to the HAD-like hydrolase superfamily. Requires Mg(2+) as cofactor. It depends on Mn(2+) as a cofactor. Co(2+) serves as cofactor. Zn(2+) is required as a cofactor.

The catalysed reaction is 5-amino-6-(5-phospho-D-ribitylamino)uracil + H2O = 5-amino-6-(D-ribitylamino)uracil + phosphate. It participates in cofactor biosynthesis; riboflavin biosynthesis; 5-amino-6-(D-ribitylamino)uracil from GTP: step 4/4. Catalyzes the dephosphorylation of 5-amino-6-(5-phospho-D-ribitylamino)uracil, and thus could be involved in the riboflavin biosynthesis pathway. Is also able to dephosphorylate flavin mononucleotide (FMN) and other phosphoric acid esters. YigB is important for the formation of dormant persister cells. In Escherichia coli (strain K12), this protein is 5-amino-6-(5-phospho-D-ribitylamino)uracil phosphatase YigB (yigB).